Here is a 399-residue protein sequence, read N- to C-terminus: Methylmalonic aciduria type A homolog, mitochondrial (399 aa).

The N-terminal 15 residues, Met1 to Ala15, are a transit peptide targeting the mitochondrion. Residues Gly131 to Ser139, Asp274, and Ser310 to Met312 contribute to the GTP site.

The protein belongs to the SIMIBI class G3E GTPase family. ArgK/MeaB subfamily.

It is found in the mitochondrion. Its function is as follows. May have GTPase activity. May also bind and hydrolyze ATP. May function as chaperone. Likely to have a role in propionyl-CoA and adenosylcobalamin metabolism. This is Methylmalonic aciduria type A homolog, mitochondrial (mmaa-1) from Caenorhabditis elegans.